We begin with the raw amino-acid sequence, 348 residues long: Inosamine-phosphate amidinotransferase 1 (348 aa).

Active-site residues include Asp-179 and His-227. Cys-332 acts as the Amidino-cysteine intermediate in catalysis.

This sequence belongs to the amidinotransferase family. As to quaternary structure, homodimer.

It carries out the reaction 1-amino-1-deoxy-scyllo-inositol 4-phosphate + L-arginine = 1-guanidino-1-deoxy-scyllo-inositol 4-phosphate + L-ornithine. It participates in antibiotic biosynthesis; streptomycin biosynthesis. Catalyzes two non-consecutive transamidination reactions. It converts scyllo-inosamine 4-phosphate into N-amidino-scyllo-inosamine 4-phosphate and N1-amidinostreptamine 6-phosphate into streptidine 6-phosphate. In Streptomyces glaucescens, this protein is Inosamine-phosphate amidinotransferase 1 (strB1).